We begin with the raw amino-acid sequence, 563 residues long: Arginine--tRNA ligase (563 aa).

Residues 120–130 carry the 'HIGH' region motif; sequence PNIAKPFHIGH.

It belongs to the class-I aminoacyl-tRNA synthetase family. In terms of assembly, monomer.

It is found in the cytoplasm. The enzyme catalyses tRNA(Arg) + L-arginine + ATP = L-arginyl-tRNA(Arg) + AMP + diphosphate. In Clostridium botulinum (strain Okra / Type B1), this protein is Arginine--tRNA ligase.